A 274-amino-acid chain; its full sequence is Ribosomal RNA small subunit methyltransferase A (274 aa).

6 residues coordinate S-adenosyl-L-methionine: histidine 15, leucine 17, glycine 42, glutamate 64, aspartate 89, and asparagine 109.

It belongs to the class I-like SAM-binding methyltransferase superfamily. rRNA adenine N(6)-methyltransferase family. RsmA subfamily.

The protein localises to the cytoplasm. The catalysed reaction is adenosine(1518)/adenosine(1519) in 16S rRNA + 4 S-adenosyl-L-methionine = N(6)-dimethyladenosine(1518)/N(6)-dimethyladenosine(1519) in 16S rRNA + 4 S-adenosyl-L-homocysteine + 4 H(+). Its function is as follows. Specifically dimethylates two adjacent adenosines (A1518 and A1519) in the loop of a conserved hairpin near the 3'-end of 16S rRNA in the 30S particle. May play a critical role in biogenesis of 30S subunits. This chain is Ribosomal RNA small subunit methyltransferase A, found in Synechococcus sp. (strain CC9902).